We begin with the raw amino-acid sequence, 404 residues long: Probable mannosyltransferase KTR3 (404 aa).

At 1 to 27 (MSVHHKKKLMPKSALLIRKYQKGIRSS) the chain is on the cytoplasmic side. The helical; Signal-anchor for type II membrane protein transmembrane segment at 28 to 44 (FIGLIIVLSFLFFMSGS) threads the bilayer. Residues 45 to 83 (RSPEVPIAQGTSVSRVASKDYLMPFTDKSQGVIHPVDDG) are stem region. The Lumenal segment spans residues 45 to 404 (RSPEVPIAQG…AGNYKLPPGI (360 aa)). Residues 84–404 (KKEKGVMVTL…AGNYKLPPGI (321 aa)) are catalytic. The active-site Nucleophile is the E295.

It belongs to the glycosyltransferase 15 family. Interacts with SVP26.

The protein localises to the membrane. In terms of biological role, possible glycosyltransferase that transfers an alpha-D-mannosyl residue from GDP-mannose into lipid-linked oligosaccharide, forming an alpha-(1-&gt;2)-D-mannosyl-D-mannose linkage. The sequence is that of Probable mannosyltransferase KTR3 (KTR3) from Saccharomyces cerevisiae (strain ATCC 204508 / S288c) (Baker's yeast).